A 183-amino-acid chain; its full sequence is Cuticle protein 2 (183 aa).

Positions 1–15 (MKLIVVAALIGVCAG) are cleaved as a signal peptide. A Chitin-binding type R&amp;R domain is found at 58–121 (SQGFQYVYDT…AQGAHLPTPP (64 aa)).

The polypeptide is Cuticle protein 2 (Lonomia obliqua (Moth)).